A 242-amino-acid chain; its full sequence is Zinc import ATP-binding protein ZnuC (242 aa).

One can recognise an ABC transporter domain in the interval 24 to 241; that stretch reads INVKDLSFAY…EKFLKMFSSY (218 aa). 56 to 63 serves as a coordination point for ATP; that stretch reads GPNGGGKT.

Belongs to the ABC transporter superfamily. Zinc importer (TC 3.A.1.15.5) family. As to quaternary structure, the complex is composed of two ATP-binding proteins (ZnuC), two transmembrane proteins (ZnuB) and a solute-binding protein (ZnuA).

It localises to the cell inner membrane. It carries out the reaction Zn(2+)(out) + ATP(in) + H2O(in) = Zn(2+)(in) + ADP(in) + phosphate(in) + H(+)(in). Part of the ABC transporter complex ZnuABC involved in zinc import. Responsible for energy coupling to the transport system. This chain is Zinc import ATP-binding protein ZnuC, found in Ehrlichia ruminantium (strain Gardel).